Reading from the N-terminus, the 185-residue chain is ATP synthase subunit b, cyanelle (185 aa).

The chain crosses the membrane as a helical span at residues Leu36–Leu58.

It belongs to the ATPase B chain family. As to quaternary structure, F-type ATPases have 2 components, F(1) - the catalytic core - and F(0) - the membrane proton channel. F(1) has five subunits: alpha(3), beta(3), gamma(1), delta(1), epsilon(1). F(0) has four main subunits: a(1), b(1), b'(1) and c(10-14). The alpha and beta chains form an alternating ring which encloses part of the gamma chain. F(1) is attached to F(0) by a central stalk formed by the gamma and epsilon chains, while a peripheral stalk is formed by the delta, b and b' chains.

It is found in the plastid. It localises to the cyanelle thylakoid membrane. Its function is as follows. F(1)F(0) ATP synthase produces ATP from ADP in the presence of a proton or sodium gradient. F-type ATPases consist of two structural domains, F(1) containing the extramembraneous catalytic core and F(0) containing the membrane proton channel, linked together by a central stalk and a peripheral stalk. During catalysis, ATP synthesis in the catalytic domain of F(1) is coupled via a rotary mechanism of the central stalk subunits to proton translocation. Functionally, component of the F(0) channel, it forms part of the peripheral stalk, linking F(1) to F(0). The chain is ATP synthase subunit b, cyanelle from Cyanophora paradoxa.